The primary structure comprises 101 residues: Small ribosomal subunit protein uS14 (101 aa).

This sequence belongs to the universal ribosomal protein uS14 family. In terms of assembly, part of the 30S ribosomal subunit. Contacts proteins S3 and S10.

In terms of biological role, binds 16S rRNA, required for the assembly of 30S particles and may also be responsible for determining the conformation of the 16S rRNA at the A site. The chain is Small ribosomal subunit protein uS14 from Enterobacter sp. (strain 638).